The chain runs to 629 residues: uncharacterized protein (629 aa).

Disordered stretches follow at residues 101–126 (SWKK…TPPT), 172–209 (PQKD…EEED), 315–339 (STPK…NSQR), and 448–468 (GENT…SEEP). A compositionally biased stretch (acidic residues) spans 200–209 (TEEEEEEEED). At Ser-334 the chain carries Phosphoserine. Polar residues predominate over residues 448–463 (GENTANNGYGPQTLNE).

This is an uncharacterized protein from Schizosaccharomyces pombe (strain 972 / ATCC 24843) (Fission yeast).